The sequence spans 372 residues: N-methyl-L-tryptophan oxidase (372 aa).

4–34 (DLIIIGSGSVGAAAGYYATRAGLNVLMTDAH) lines the FAD pocket. C308 carries the post-translational modification S-8alpha-FAD cysteine.

The protein belongs to the MSOX/MTOX family. MTOX subfamily. As to quaternary structure, monomer. FAD serves as cofactor.

It catalyses the reaction N(alpha)-methyl-L-tryptophan + O2 + H2O = L-tryptophan + formaldehyde + H2O2. Functionally, catalyzes the oxidative demethylation of N-methyl-L-tryptophan. The protein is N-methyl-L-tryptophan oxidase of Escherichia coli O6:H1 (strain CFT073 / ATCC 700928 / UPEC).